The chain runs to 483 residues: Spore germination protein B1 (483 aa).

5 helical membrane passes run 289-309 (ILITIYLPGLYISLVSFHTGL), 323-343 (LNVPFPPFVEAFIMIFTIELI), 353-373 (PIGQTIGLIGGVVIGQAAVQA), 375-395 (IVSALMVIVVSVTALASFTVP), and 410-430 (VMISATALGMYGVIMVYLFVI).

Belongs to the GerABKA family.

It is found in the cell membrane. In terms of biological role, involved in the response to the germinative mixture of L-asparagine, glucose, fructose and potassium ions (AGFK). Cannot stimulate germination in the absence of gerD and gerK gene products (fructose and glucose receptors respectively). This Bacillus subtilis (strain 168) protein is Spore germination protein B1 (gerBA).